We begin with the raw amino-acid sequence, 448 residues long: GA-binding protein subunit beta-2 (448 aa).

ANK repeat units follow at residues 5-34 (DLGK…PFTT), 37-66 (LGTS…SRDA), 70-99 (VDRT…DVNA), 103-132 (LKMT…DVHA), and 136-166 (FDKS…QVNV). Ser-256 carries the post-translational modification Phosphoserine. Disordered regions lie at residues 325 to 354 (EEEE…GNER) and 420 to 448 (ELEE…TVSS). The span at 337–354 (RIGEKTNSVEESKEGNER) shows a compositional bias: basic and acidic residues. The stretch at 345–395 (VEESKEGNERELLQQQLQEANRRAQEYRHQLLKKEQEAEQYRLKLEAIARQ) forms a coiled coil. Over residues 428 to 448 (VTGSAGTTEPHTRVSMATVSS) the composition is skewed to polar residues.

Heterotetramer of two alpha and two beta subunits. The C-terminal is necessary for the formation of a heterotetrameric GABP-alpha-2/beta-2 complex, and also facilitates homotypic dimerization. Interacts with ADGRB2.

Its subcellular location is the nucleus. Its function is as follows. May function as transcription factor capable of interacting with purine rich repeats (GA repeats). The sequence is that of GA-binding protein subunit beta-2 (GABPB2) from Homo sapiens (Human).